Here is a 466-residue protein sequence, read N- to C-terminus: 3-isopropylmalate dehydratase large subunit (466 aa).

[4Fe-4S] cluster is bound by residues Cys347, Cys407, and Cys410.

This sequence belongs to the aconitase/IPM isomerase family. LeuC type 1 subfamily. Heterodimer of LeuC and LeuD. Requires [4Fe-4S] cluster as cofactor.

It carries out the reaction (2R,3S)-3-isopropylmalate = (2S)-2-isopropylmalate. Its pathway is amino-acid biosynthesis; L-leucine biosynthesis; L-leucine from 3-methyl-2-oxobutanoate: step 2/4. Functionally, catalyzes the isomerization between 2-isopropylmalate and 3-isopropylmalate, via the formation of 2-isopropylmaleate. In Shigella flexneri, this protein is 3-isopropylmalate dehydratase large subunit.